The primary structure comprises 200 residues: 3-isopropylmalate dehydratase small subunit (200 aa).

The protein belongs to the LeuD family. LeuD type 1 subfamily. As to quaternary structure, heterodimer of LeuC and LeuD.

The catalysed reaction is (2R,3S)-3-isopropylmalate = (2S)-2-isopropylmalate. It functions in the pathway amino-acid biosynthesis; L-leucine biosynthesis; L-leucine from 3-methyl-2-oxobutanoate: step 2/4. Its function is as follows. Catalyzes the isomerization between 2-isopropylmalate and 3-isopropylmalate, via the formation of 2-isopropylmaleate. The chain is 3-isopropylmalate dehydratase small subunit from Campylobacter jejuni subsp. jejuni serotype O:23/36 (strain 81-176).